Reading from the N-terminus, the 430-residue chain is Cytochrome c biogenesis protein CcsB (430 aa).

A run of 3 helical transmembrane segments spans residues 14–34 (LRLAIALLLLIAAASAVGTIL), 72–92 (SVWFLALLAWLGLALMLCSWR), and 162–182 (VGPLLVHTGLVLLLIGAAWGA).

This sequence belongs to the Ccs1/CcsB family. May interact with CcsA.

Its subcellular location is the cellular thylakoid membrane. Its function is as follows. Required during biogenesis of c-type cytochromes (cytochrome c6 and cytochrome f) at the step of heme attachment. This chain is Cytochrome c biogenesis protein CcsB, found in Synechococcus sp. (strain WH7803).